The sequence spans 501 residues: Lysine--tRNA ligase (501 aa).

2 residues coordinate Mg(2+): glutamate 402 and glutamate 409.

It belongs to the class-II aminoacyl-tRNA synthetase family. In terms of assembly, homodimer. Requires Mg(2+) as cofactor.

It is found in the cytoplasm. The catalysed reaction is tRNA(Lys) + L-lysine + ATP = L-lysyl-tRNA(Lys) + AMP + diphosphate. This chain is Lysine--tRNA ligase (lysS), found in Helicobacter pylori (strain J99 / ATCC 700824) (Campylobacter pylori J99).